A 118-amino-acid chain; its full sequence is NADH-quinone oxidoreductase subunit A 2 (118 aa).

Transmembrane regions (helical) follow at residues 5–25 (YLPILVLVVIAVLFGLGSVIF), 62–82 (LIAMLFILFDIEAVFLYPWAV), and 87–107 (LGMFGLIEMGVFIVILFVGYV).

The protein belongs to the complex I subunit 3 family. NDH-1 is composed of 14 different subunits. Subunits NuoA, H, J, K, L, M, N constitute the membrane sector of the complex.

Its subcellular location is the cell inner membrane. It carries out the reaction a quinone + NADH + 5 H(+)(in) = a quinol + NAD(+) + 4 H(+)(out). Its function is as follows. NDH-1 shuttles electrons from NADH, via FMN and iron-sulfur (Fe-S) centers, to quinones in the respiratory chain. The immediate electron acceptor for the enzyme in this species is believed to be ubiquinone. Couples the redox reaction to proton translocation (for every two electrons transferred, four hydrogen ions are translocated across the cytoplasmic membrane), and thus conserves the redox energy in a proton gradient. This Citrifermentans bemidjiense (strain ATCC BAA-1014 / DSM 16622 / JCM 12645 / Bem) (Geobacter bemidjiensis) protein is NADH-quinone oxidoreductase subunit A 2.